We begin with the raw amino-acid sequence, 247 residues long: Fumarate reductase iron-sulfur subunit (247 aa).

Y12 serves as a coordination point for a menaquinone. One can recognise a 2Fe-2S ferredoxin-type domain in the interval 14-94 (PEIESAPTFQ…PGPVRVEPMR (81 aa)). [2Fe-2S] cluster contacts are provided by C56, C61, and C76. Residues 140 to 169 (LDAFKQFSMCINCMLCYSACPVYALDPDFL) enclose the 4Fe-4S ferredoxin-type domain. [4Fe-4S] cluster-binding residues include C149, C152, and C155. Residues C159, C205, and C211 each contribute to the [3Fe-4S] cluster site. C215 lines the [4Fe-4S] cluster pocket. 226–229 (QRYK) contacts a menaquinone.

This sequence belongs to the succinate dehydrogenase/fumarate reductase iron-sulfur protein family. In terms of assembly, fumarate dehydrogenase forms part of an enzyme complex containing four subunits: a flavoprotein, an iron-sulfur, and two hydrophobic anchor proteins. [2Fe-2S] cluster serves as cofactor. The cofactor is [3Fe-4S] cluster. [4Fe-4S] cluster is required as a cofactor.

It localises to the cell membrane. The catalysed reaction is a quinone + succinate = fumarate + a quinol. The enzyme catalyses a menaquinone + succinate = a menaquinol + fumarate. The sequence is that of Fumarate reductase iron-sulfur subunit (frdB) from Mycobacterium tuberculosis (strain CDC 1551 / Oshkosh).